The primary structure comprises 76 residues: Envelope small membrane protein (76 aa).

Topologically, residues 1 to 16 are virion surface; sequence MYSFVSEETGTLIVNS. Residues 17 to 37 form a helical membrane-spanning segment; it reads VLLFLAFVVFLLVTLAILTAL. The Intravirion portion of the chain corresponds to 38 to 76; sequence RLCAYCCNIVNVSLVKPTVYVYSRVKNLNSSEGVPDLLV.

Belongs to the betacoronaviruses E protein family. Homopentamer. Interacts with membrane protein M in the budding compartment of the host cell, which is located between endoplasmic reticulum and the Golgi complex. Interacts with Nucleoprotein.

The protein localises to the host Golgi apparatus membrane. In terms of biological role, plays a central role in virus morphogenesis and assembly. Acts as a viroporin and self-assembles in host membranes forming pentameric protein-lipid pores that allow ion transport. Also plays a role in the induction of apoptosis. This is Envelope small membrane protein from Rhinolophus sinicus (Chinese rufous horseshoe bat).